A 581-amino-acid chain; its full sequence is Arginine--tRNA ligase (581 aa).

The 'HIGH' region signature appears at 122–132; it reads PNVAKPMHVGH.

Belongs to the class-I aminoacyl-tRNA synthetase family. As to quaternary structure, monomer.

The protein localises to the cytoplasm. The catalysed reaction is tRNA(Arg) + L-arginine + ATP = L-arginyl-tRNA(Arg) + AMP + diphosphate. The sequence is that of Arginine--tRNA ligase from Francisella tularensis subsp. tularensis (strain FSC 198).